The sequence spans 111 residues: Nucleoid-associated protein NMCC_1355 (111 aa).

The protein belongs to the YbaB/EbfC family. As to quaternary structure, homodimer.

The protein resides in the cytoplasm. The protein localises to the nucleoid. Functionally, binds to DNA and alters its conformation. May be involved in regulation of gene expression, nucleoid organization and DNA protection. In Neisseria meningitidis serogroup C (strain 053442), this protein is Nucleoid-associated protein NMCC_1355.